We begin with the raw amino-acid sequence, 172 residues long: MVINFEELHPNERVELERNIFFSTLEQLKGWARSNSLWPMTFGLACCAIEMMGVGSSHYDLDRFGSFFRTSPRQSDVMIVSGTVTKKMAPIVRRLYDQMPEPKWVIAMGSCATAGGPYVNSYAVVKGVDQIVPVDVYIPGCPPNPAALIYGINKLKEKIRYEAKTGKQVTNK.

4 residues coordinate [4Fe-4S] cluster: Cys46, Cys47, Cys111, and Cys141.

This sequence belongs to the complex I 20 kDa subunit family. As to quaternary structure, NDH-1 is composed of 14 different subunits. Subunits NuoB, C, D, E, F, and G constitute the peripheral sector of the complex. [4Fe-4S] cluster is required as a cofactor.

It localises to the cell membrane. The enzyme catalyses a quinone + NADH + 5 H(+)(in) = a quinol + NAD(+) + 4 H(+)(out). Functionally, NDH-1 shuttles electrons from NADH, via FMN and iron-sulfur (Fe-S) centers, to quinones in the respiratory chain. The immediate electron acceptor for the enzyme in this species is believed to be a menaquinone. Couples the redox reaction to proton translocation (for every two electrons transferred, four hydrogen ions are translocated across the cytoplasmic membrane), and thus conserves the redox energy in a proton gradient. This chain is NADH-quinone oxidoreductase subunit B, found in Bacillus cereus (strain G9842).